A 389-amino-acid polypeptide reads, in one-letter code: Putative RNA methyltransferase R405 (389 aa).

Positions 207, 261, and 314 each coordinate S-adenosyl-L-methionine. Cysteine 342 acts as the Nucleophile in catalysis.

Belongs to the class I-like SAM-binding methyltransferase superfamily. RNA M5U methyltransferase family.

The protein is Putative RNA methyltransferase R405 of Acanthamoeba polyphaga (Amoeba).